We begin with the raw amino-acid sequence, 89 residues long: Large ribosomal subunit protein bL27 (89 aa).

The segment at 1–24 (MAHKKAGGSSRNGRDSDGRRLGVK) is disordered.

This sequence belongs to the bacterial ribosomal protein bL27 family.

The polypeptide is Large ribosomal subunit protein bL27 (Azorhizobium caulinodans (strain ATCC 43989 / DSM 5975 / JCM 20966 / LMG 6465 / NBRC 14845 / NCIMB 13405 / ORS 571)).